The following is a 94-amino-acid chain: Small ubiquitin-related modifier 3 (94 aa).

Lysine 11 participates in a covalent cross-link: Glycyl lysine isopeptide (Lys-Gly) (interchain with G-Cter in SUMO). The region spanning 15-92 (DHINLKVAGQ…IDVFQQQTGG (78 aa)) is the Ubiquitin-like domain. Glycine 92 participates in a covalent cross-link: Glycyl lysine isopeptide (Gly-Lys) (interchain with K-? in acceptor proteins). Positions 93 to 94 (SC) are excised as a propeptide.

It belongs to the ubiquitin family. SUMO subfamily. As to quaternary structure, interacts with sae2 and ube2i. Covalently attached to a number of proteins. In terms of processing, polymeric chains can be formed through Lys-11 cross-linking. Post-translationally, cleavage of precursor form by a sentrin-specific protease is necessary for function.

The protein resides in the cytoplasm. Its subcellular location is the nucleus. It localises to the PML body. Ubiquitin-like protein which can be covalently attached to target lysines either as a monomer or as a lysine-linked polymer. Does not seem to be involved in protein degradation and may function as an antagonist of ubiquitin in the degradation process. Plays a role in a number of cellular processes such as nuclear transport, DNA replication and repair, mitosis and signal transduction. Covalent attachment to its substrates requires prior activation by the E1 complex sae1-sae2 and linkage to the E2 enzyme ube2i. In Danio rerio (Zebrafish), this protein is Small ubiquitin-related modifier 3 (sumo3).